Reading from the N-terminus, the 579-residue chain is Protein disulfide isomerase-like 1-3 (579 aa).

An N-terminal signal peptide occupies residues 1–25; the sequence is MASSSTSISLLLFVSFILLLVNSRA. N27 carries N-linked (GlcNAc...) asparagine glycosylation. Composition is skewed to basic and acidic residues over residues 44-69 and 80-89; these read EESK…RDFE and EFHHGDHGYE. Residues 44–91 are disordered; the sequence is EESKEQSHGGGSYHEEEHDHQHRDFENYDDLEQGGGEFHHGDHGYEEE. Positions 81–204 constitute a Thioredoxin 1 domain; that stretch reads FHHGDHGYEE…IVTWLKKKAS (124 aa). N108 and N115 each carry an N-linked (GlcNAc...) asparagine glycan. Residues C128 and C131 each act as nucleophile in the active site. A disulfide bond links C128 and C131. Residues N209, N293, N313, and N338 are each glycosylated (N-linked (GlcNAc...) asparagine). Residues 416 to 546 enclose the Thioredoxin 2 domain; that stretch reads DFLADKLKPF…LYKFLKKHAS (131 aa). Catalysis depends on nucleophile residues C467 and C470. A disulfide bond links C467 and C470. Residue N520 is glycosylated (N-linked (GlcNAc...) asparagine). A disordered region spans residues 558 to 579; sequence EPVISTMKSDEKIEGDSSKDEL. Over residues 565–579 the composition is skewed to basic and acidic residues; that stretch reads KSDEKIEGDSSKDEL. A Prevents secretion from ER motif is present at residues 576–579; that stretch reads KDEL.

This sequence belongs to the protein disulfide isomerase family. As to expression, widely expressed.

The protein resides in the endoplasmic reticulum lumen. The enzyme catalyses Catalyzes the rearrangement of -S-S- bonds in proteins.. Acts as a protein-folding catalyst that interacts with nascent polypeptides to catalyze the formation, isomerization, and reduction or oxidation of disulfide bonds. The polypeptide is Protein disulfide isomerase-like 1-3 (PDIL1-3) (Arabidopsis thaliana (Mouse-ear cress)).